The chain runs to 160 residues: Nitrate reductase [NADH] (160 aa).

Position 37 (Thr-37) interacts with FAD.

This sequence belongs to the nitrate reductase family. As to quaternary structure, homodimer. FAD is required as a cofactor. The cofactor is heme. Mo-molybdopterin serves as cofactor.

The catalysed reaction is nitrite + NAD(+) + H2O = nitrate + NADH + H(+). Its function is as follows. Nitrate reductase is a key enzyme involved in the first step of nitrate assimilation in plants, fungi and bacteria. The sequence is that of Nitrate reductase [NADH] (NIA) from Lotus tetragonolobus (Winged pea).